Consider the following 64-residue polypeptide: Large ribosomal subunit protein bL35 (64 aa).

Residues 18-39 (GSGLVKHYPSNKHHKNTHKKEN) are disordered. Over residues 26–39 (PSNKHHKNTHKKEN) the composition is skewed to basic residues.

Belongs to the bacterial ribosomal protein bL35 family.

The sequence is that of Large ribosomal subunit protein bL35 from Symbiobacterium thermophilum (strain DSM 24528 / JCM 14929 / IAM 14863 / T).